Consider the following 168-residue polypeptide: MHIESKNRQIKKDIVVEITKKINDSQSLFLAEYRGLTVAKLLNLRKEAKKHNVEIKVYKNRLVKLATQKLGHSDLDKFLVGPNLFVFSNELGMDGAKVLAEFAKKNKKLVLKAGIFDGKVVDAAGVKAVAELPTYEEALTILASSLLGPLRQISLSFKLLVDENKLSN.

Belongs to the universal ribosomal protein uL10 family. As to quaternary structure, part of the ribosomal stalk of the 50S ribosomal subunit. The N-terminus interacts with L11 and the large rRNA to form the base of the stalk. The C-terminus forms an elongated spine to which L12 dimers bind in a sequential fashion forming a multimeric L10(L12)X complex.

Forms part of the ribosomal stalk, playing a central role in the interaction of the ribosome with GTP-bound translation factors. This is Large ribosomal subunit protein uL10 (rplJ) from Mycoplasmopsis pulmonis (strain UAB CTIP) (Mycoplasma pulmonis).